Here is a 396-residue protein sequence, read N- to C-terminus: Phosphoglycerate kinase (396 aa).

Residues 21 to 23, Arg-36, 59 to 62, Arg-118, and Arg-151 each bind substrate; these read DLN and HFDR. ATP contacts are provided by residues Lys-201, Glu-323, and 353–356; that span reads GGDT.

It belongs to the phosphoglycerate kinase family. In terms of assembly, monomer.

The protein localises to the cytoplasm. The enzyme catalyses (2R)-3-phosphoglycerate + ATP = (2R)-3-phospho-glyceroyl phosphate + ADP. The protein operates within carbohydrate degradation; glycolysis; pyruvate from D-glyceraldehyde 3-phosphate: step 2/5. The sequence is that of Phosphoglycerate kinase from Granulibacter bethesdensis (strain ATCC BAA-1260 / CGDNIH1).